The sequence spans 156 residues: Large ribosomal subunit protein uL15 (156 aa).

Basic and acidic residues predominate over residues 1 to 13; sequence MKLNEIKDNEGAT. The segment at 1–39 is disordered; it reads MKLNEIKDNEGATKNRKRLGRGIGSGSGKTAGRGVKGQK. Gly residues predominate over residues 21 to 35; that stretch reads RGIGSGSGKTAGRGV.

This sequence belongs to the universal ribosomal protein uL15 family. In terms of assembly, part of the 50S ribosomal subunit.

Binds to the 23S rRNA. The chain is Large ribosomal subunit protein uL15 from Rhizobium meliloti (strain 1021) (Ensifer meliloti).